The sequence spans 883 residues: MMDMQVRKVRKPPACTQCRKRKIGCDRAKPICGNCVKYNKPDCFYPDGPGKMVAVPSASGMSTHGNGQGSNHFSQGNGVNQKNVMIQTQYPIMQTSIEAFNFSFNPSVDTAMQWTKAASYQNNNTNNNTAPRQNSSTVSSNVHGNTIVRSDSPDVPSMDQIREYNTRLQLVNAQSFDYTDNPYSFNVGINQDSAVFDLMTSPFTQEEVLIKEIDFLKNKLLDLQSLQLKSLKEKSNLNADNTTANKINKTGENSKKGKVDGKRAGFDHQTSRTSQSSQKYFTALTITDVQSLVQVKPLKDTPNYLFTKNFIIFRDHYLFKFYNILHDICHINQFKVSPPNNKNHQQYMEVCKVNFPPKAIIIETLNSESLNNLNIEEFLPIFDKTLLLEFVHNSFPNGDTCPSFSTVDLPLSQLTKLGELTVLLLLLNDSMTLFNKQAINNHVSALMNNLRLIRSQITLINLEYYDQETIKFIAITKFYESLYMHDDHKSSLDEDLSCLLSFQIKDFKLFHFLKKMYYSRHSLLGQSSFMVPAAENLSPIPASIDTNDIPLIANDLKLLETQAKLINILQGVPFYLPVNLTKIESLLETLTMGVSNTVDLYFHDNEVRKEWKDTLNFINTIVYTNFFLFVQNESSLSMAVQHSSNNNKTSNSERCAKDLMKIISNMHIFYSITFNFIFPIKSIKSFSSGNNRFHSNGKEFLFANHFIEILQNFIAITFAIFQRCEVILYDEFYKNLSNEEINVQLLLIHDKILEILKKIEIIVSFLRDEMNSNGSFKSIKGFNKVLNLIKYMLRFSKKKQNFARNSDNNNVTDYSQSAKNKNVLLKFPVSELNRIYLKFKEISDFLMEREVVQRSIIIDKDLESDNLGITTANFNDFYDAFYN.

A DNA-binding region (zn(2)-C6 fungal-type) is located at residues 14–45 (ACTQCRKRKIGCDRAKPICGNCVKYNKPDCFY). 2 disordered regions span residues 121–157 (QNNNTNNNTAPRQNSSTVSSNVHGNTIVRSDSPDVPS) and 241–273 (NTTANKINKTGENSKKGKVDGKRAGFDHQTSRT). The span at 130–149 (APRQNSSTVSSNVHGNTIVR) shows a compositional bias: polar residues. A Phosphoserine modification is found at S150. Residues 241–251 (NTTANKINKTG) show a composition bias toward polar residues. The span at 252–270 (ENSKKGKVDGKRAGFDHQT) shows a compositional bias: basic and acidic residues.

Forms a heteromer with RSC3. Interacts with NPL6. Component of the two forms of the RSC complex composed of at least either RSC1 or RSC2, and ARP7, ARP9, LDB7, NPL6, RSC3, RSC30, RSC4, RSC58, RSC6, RSC8, RSC9, SFH1, STH1, HTL1 and probably RTT102. The complexes interact with histone and histone variant components of centromeric chromatin. Component of a fungal-specific module (HTL1-LDB7-NPL6-RSC3-RSC30) within the RSC complex.

The protein resides in the nucleus. Its function is as follows. Component of the chromatin structure-remodeling complex (RSC), which is involved in transcription regulation and nucleosome positioning. RSC is responsible for the transfer of a histone octamer from a nucleosome core particle to naked DNA. The reaction requires ATP and involves an activated RSC-nucleosome intermediate. Remodeling reaction also involves DNA translocation, DNA twist and conformational change. As a reconfigurer of centromeric and flanking nucleosomes, RSC complex is required both for proper kinetochore function in chromosome segregation and, via a PKC1-dependent signaling pathway, for organization of the cellular cytoskeleton. This subunit is required for transcription of ribosomal protein genes and genes involved in the integrity of the cell wall. Together with HTL1, LDB7, NPL6, RSC3 components, defines a fungal-specific module within the RSC complex that plays a role in many cellular functions including the maintenance of cell wall integrity. This Saccharomyces cerevisiae (strain ATCC 204508 / S288c) (Baker's yeast) protein is Chromatin structure-remodeling complex protein RSC30 (RSC30).